A 462-amino-acid chain; its full sequence is Hydroxymethylglutaryl-CoA synthase (462 aa).

The Proton donor/acceptor role is filled by Glu-92. Catalysis depends on Cys-124, which acts as the Acyl-thioester intermediate. Residues Cys-124, Thr-167, Ser-219, His-257, Lys-266, Asn-327, and Ser-360 each contribute to the (3S)-3-hydroxy-3-methylglutaryl-CoA site. The active-site Proton donor/acceptor is the His-257. Lys-408 participates in a covalent cross-link: Glycyl lysine isopeptide (Lys-Gly) (interchain with G-Cter in SUMO).

This sequence belongs to the thiolase-like superfamily. HMG-CoA synthase family. Ubiquitinated.

It carries out the reaction acetoacetyl-CoA + acetyl-CoA + H2O = (3S)-3-hydroxy-3-methylglutaryl-CoA + CoA + H(+). It functions in the pathway metabolic intermediate biosynthesis; (R)-mevalonate biosynthesis; (R)-mevalonate from acetyl-CoA: step 2/3. This enzyme condenses acetyl-CoA with acetoacetyl-CoA to form HMG-CoA, which is the substrate for HMG-CoA reductase. This Caenorhabditis elegans protein is Hydroxymethylglutaryl-CoA synthase.